A 353-amino-acid polypeptide reads, in one-letter code: 3-dehydroquinate synthase (353 aa).

Residues 62-67 (DGEQYK), 96-100 (GVIGD), 120-121 (TT), Lys133, and Lys142 each bind NAD(+). Glu175, His236, and His253 together coordinate Zn(2+).

This sequence belongs to the sugar phosphate cyclases superfamily. Dehydroquinate synthase family. NAD(+) is required as a cofactor. Requires Co(2+) as cofactor. It depends on Zn(2+) as a cofactor.

The protein resides in the cytoplasm. The enzyme catalyses 7-phospho-2-dehydro-3-deoxy-D-arabino-heptonate = 3-dehydroquinate + phosphate. Its pathway is metabolic intermediate biosynthesis; chorismate biosynthesis; chorismate from D-erythrose 4-phosphate and phosphoenolpyruvate: step 2/7. Functionally, catalyzes the conversion of 3-deoxy-D-arabino-heptulosonate 7-phosphate (DAHP) to dehydroquinate (DHQ). In Helicobacter hepaticus (strain ATCC 51449 / 3B1), this protein is 3-dehydroquinate synthase.